Reading from the N-terminus, the 757-residue chain is Cartilage oligomeric matrix protein (757 aa).

An N-terminal signal peptide occupies residues 1 to 20; it reads MVPDTACVLLLTLAALGASG. The tract at residues 22–86 is COMP N-terminal; sequence GQSPLGSDLG…SVRTGLPSVR (65 aa). The region spanning 87-126 is the EGF-like 1 domain; sequence PLLHCAPGFCFPGVACIQTESGARCGPCPAGFTGNGSHCT. Cystine bridges form between cysteine 91-cysteine 102, cysteine 96-cysteine 111, cysteine 114-cysteine 125, cysteine 131-cysteine 142, cysteine 136-cysteine 151, cysteine 154-cysteine 178, cysteine 184-cysteine 197, cysteine 191-cysteine 206, cysteine 209-cysteine 221, cysteine 229-cysteine 243, cysteine 237-cysteine 253, cysteine 255-cysteine 266, cysteine 282-cysteine 287, cysteine 292-cysteine 312, cysteine 328-cysteine 348, cysteine 351-cysteine 371, cysteine 387-cysteine 407, cysteine 410-cysteine 430, cysteine 448-cysteine 468, cysteine 484-cysteine 504, and cysteine 520-cysteine 741. Asparagine 121 is a glycosylation site (N-linked (GlcNAc...) asparagine). The EGF-like 2; calcium-binding domain occupies 127–179; sequence DVNECNAHPCFPRVRCINTSPGFRCEACPPGYSGPTHQGVGLAFAKANKQVCT. The EGF-like 3; calcium-binding domain maps to 180-222; sequence DINECETGQHNCVPNSVCINTRGSFQCGPCQPGFVGDQASGCQ. The 43-residue stretch at 225–267 folds into the EGF-like 4 domain; sequence AQRFCPDGSPSECHEHADCVLERDGSRSCVCAVGWAGNGILCG. TSP type-3 repeat units lie at residues 268–300, 301–336, 337–359, 360–395, 396–418, 419–456, 457–492, and 493–528; these read RDTD…NSGQ, EDVD…NPDQ, RNTD…NDDQ, KDTD…NSDQ, KDSD…NPDQ, ADVD…NSAQ, EDSD…NPGQ, and EDAD…EVTL. The segment at 298–503 is disordered; the sequence is SGQEDVDRDG…DADRDGVGDV (206 aa). 2 stretches are compositionally biased toward basic and acidic residues: residues 334 to 346 and 352 to 370; these read PDQR…KWGD and RSQK…RGDA. The Cell attachment site motif lies at 367–369; sequence RGD. Residues 467–476 show a composition bias toward acidic residues; it reads ACDDDDDNDG. Positions 527 to 757 are mediates cell survival and induction of the IAP family of survival proteins; it reads TLTDFRAFQT…DYETHQLRQA (231 aa). The region spanning 532–746 is the TSP C-terminal domain; that stretch reads RAFQTVVLDP…LRYRCNDTIP (215 aa). Asparagine 742 is a glycosylation site (N-linked (GlcNAc...) asparagine).

Belongs to the thrombospondin family. Pentamer; disulfide-linked. Exists in a more compact conformation in the presence of calcium and shows a more extended conformation in the absence of calcium. Interacts with ITGB3, ITGA5 and FN1. Binding to FN1 requires the presence of divalent cations (Ca(2+), Mg(2+) or Mn(2+)). The greatest amount of binding is seen in the presence of Mn(2+). Interacts with MATN1, MATN3, MATN4 and ACAN. Binds heparin, heparan sulfate and chondroitin sulfate. EDTA dimishes significantly its binding to ACAN and abolishes its binding to MATN3, MATN4 and chondroitin sulfate. Interacts with collagen I, II and IX, and interaction with these collagens is dependent on the presence of zinc ions. Interacts with ADAMTS12. Interacts with ITGA7. Ca(2+) is required as a cofactor. Proteolytically cleaved by metalloproteases ADAMTS4 and ADAMTS1 with ADAMTS4 showing more potent activity. Abundantly expressed in the chondrocyte extracellular matrix, and is also found in bone, tendon, ligament and synovium and blood vessels. Increased amounts are produced during late stages of osteoarthritis in the area adjacent to the main defect.

The protein resides in the secreted. The protein localises to the extracellular space. Its subcellular location is the extracellular matrix. Functionally, plays a role in the structural integrity of cartilage via its interaction with other extracellular matrix proteins such as the collagens and fibronectin. Can mediate the interaction of chondrocytes with the cartilage extracellular matrix through interaction with cell surface integrin receptors. Could play a role in the pathogenesis of osteoarthritis. Potent suppressor of apoptosis in both primary chondrocytes and transformed cells. Suppresses apoptosis by blocking the activation of caspase-3 and by inducing the IAP family of survival proteins (BIRC3, BIRC2, BIRC5 and XIAP). Essential for maintaining a vascular smooth muscle cells (VSMCs) contractile/differentiated phenotype under physiological and pathological stimuli. Maintains this phenotype of VSMCs by interacting with ITGA7. The polypeptide is Cartilage oligomeric matrix protein (Homo sapiens (Human)).